The primary structure comprises 199 residues: Large ribosomal subunit protein bL9 (199 aa).

The tract at residues 169–199 is disordered; that stretch reads TGGFTEEYDPNAEPGEIPTELLEGGEEAAEA.

It belongs to the bacterial ribosomal protein bL9 family.

Its function is as follows. Binds to the 23S rRNA. In Novosphingobium aromaticivorans (strain ATCC 700278 / DSM 12444 / CCUG 56034 / CIP 105152 / NBRC 16084 / F199), this protein is Large ribosomal subunit protein bL9.